We begin with the raw amino-acid sequence, 167 residues long: uncharacterized protein (167 aa).

This sequence belongs to the A.longa ORF167/ORF288 family.

It localises to the plastid. This is an uncharacterized protein from Euglena longa (Euglenophycean alga).